The following is a 410-amino-acid chain: MAETMKDITMKNDESQEEEIPDQFLCCVCLELLYKPIVLSCGHLSCFWCVHKSMNGFRESHCPICRDPYVHFPSVCQKLYFLLKKMYPLAHKKREEQVLKEEQERECFSPQIDLVLDLSVCSGDSLNVSDKQKVEECSNAANLLSSSSSRGDIPCIPKNQEPTDAKALNVHENELLKDNKVSKQISKDDLLCSACKELLVRPVVLNCGHVYCEGCVVDMAEESEKIKCQECNVCDPRGFPKVCLILEQLLEENFPEEYNSRSSKVQKTLAHNSKGNIQSYLKEGPSLSNDNNNDDPWLANPGSNVHFGAGCDSCGVYPIIGDRYRCKDCKEEIGYDLCKDCYETPSKVPGRFNQQHTPDHRLELARSPQVLINFNSIGILLGPVISNEGMDTDEGEEGPPGSSNESSSTE.

RING-type zinc fingers lie at residues 26-66 (CCVC…PICR) and 192-232 (CSAC…QECN). The ZZ-type zinc finger occupies 306 to 370 (HFGAGCDSCG…RLELARSPQV (65 aa)). Residues cysteine 311, cysteine 314, cysteine 326, cysteine 329, cysteine 338, cysteine 341, histidine 356, and histidine 360 each coordinate Zn(2+). The tract at residues 385–410 (ISNEGMDTDEGEEGPPGSSNESSSTE) is disordered. Residues 399 to 410 (PPGSSNESSSTE) show a composition bias toward low complexity.

It is found in the cytoplasm. It catalyses the reaction S-ubiquitinyl-[E2 ubiquitin-conjugating enzyme]-L-cysteine + [acceptor protein]-L-lysine = [E2 ubiquitin-conjugating enzyme]-L-cysteine + N(6)-ubiquitinyl-[acceptor protein]-L-lysine.. It participates in protein modification; protein ubiquitination. In terms of biological role, E3 ubiquitin-protein ligase that mediates ubiquitination and subsequent proteasomal degradation of target proteins. Functions in the N-end rule pathway of protein degradation, where it specifically recognizes and ubiquitinates proteins with a N-terminal bulky aromatic amino acid (Phe). Does not act on aliphatic hydrophobic and basic N-terminal residues (Arg or Leu) containing proteins. This is E3 ubiquitin-protein ligase PRT1 (PRT1) from Arabidopsis thaliana (Mouse-ear cress).